The following is a 1324-amino-acid chain: Structural maintenance of chromosomes protein 4 (1324 aa).

Residues 1 to 24 (MSDKGIFRTSSTPSIVDVTPDRGE) form a disordered region. The residue at position 19 (Thr19) is a Phosphothreonine; by CDC2. 155–162 (GPNGSGKS) lines the ATP pocket. Coiled-coil stretches lie at residues 310-337 (QELSNSDDICAEKESRLKLVLSEKAKLE) and 370-628 (NKKT…KASL). The region spanning 651–764 (NGFFGRLGDL…KNLEQANRIA (114 aa)) is the SMC hinge domain. Coiled-coil stretches lie at residues 825–1077 (YRQH…MSNL) and 1297–1324 (LSSRLVGIYKTANMTKSVTINNKEILTD).

The protein belongs to the SMC family. SMC4 subfamily. As to quaternary structure, forms a heterodimer with cut14/smc2. Component of the condensin complex, which contains the smc2 and smc4 heterodimer, and three non smc subunits that probably regulate the complex: cnd1, cnd2 and cnd3. Interacts with C1739.07. In terms of processing, phosphorylated by CDC2 on Thr-19 at metaphase.

Its subcellular location is the nucleus. It is found in the cytoplasm. The protein resides in the chromosome. Its function is as follows. Central component of the condensin complex, a complex required for conversion of interphase chromatin into mitotic-like condense chromosomes. The condensin complex probably introduces positive supercoils into relaxed DNA in the presence of type I topoisomerases and converts nicked DNA into positive knotted forms in the presence of type II topoisomerases. In Schizosaccharomyces pombe (strain 972 / ATCC 24843) (Fission yeast), this protein is Structural maintenance of chromosomes protein 4 (cut3).